The following is a 611-amino-acid chain: Dihydroxy-acid dehydratase (611 aa).

Asp-81 is a Mg(2+) binding site. Cys-122 contacts [2Fe-2S] cluster. 2 residues coordinate Mg(2+): Asp-123 and Lys-124. The residue at position 124 (Lys-124) is an N6-carboxylysine. Cys-195 lines the [2Fe-2S] cluster pocket. Glu-491 provides a ligand contact to Mg(2+). The active-site Proton acceptor is the Ser-517.

This sequence belongs to the IlvD/Edd family. As to quaternary structure, homodimer. [2Fe-2S] cluster is required as a cofactor. Mg(2+) serves as cofactor.

It catalyses the reaction (2R)-2,3-dihydroxy-3-methylbutanoate = 3-methyl-2-oxobutanoate + H2O. It carries out the reaction (2R,3R)-2,3-dihydroxy-3-methylpentanoate = (S)-3-methyl-2-oxopentanoate + H2O. It functions in the pathway amino-acid biosynthesis; L-isoleucine biosynthesis; L-isoleucine from 2-oxobutanoate: step 3/4. It participates in amino-acid biosynthesis; L-valine biosynthesis; L-valine from pyruvate: step 3/4. In terms of biological role, functions in the biosynthesis of branched-chain amino acids. Catalyzes the dehydration of (2R,3R)-2,3-dihydroxy-3-methylpentanoate (2,3-dihydroxy-3-methylvalerate) into 2-oxo-3-methylpentanoate (2-oxo-3-methylvalerate) and of (2R)-2,3-dihydroxy-3-methylbutanoate (2,3-dihydroxyisovalerate) into 2-oxo-3-methylbutanoate (2-oxoisovalerate), the penultimate precursor to L-isoleucine and L-valine, respectively. This chain is Dihydroxy-acid dehydratase, found in Brucella suis (strain ATCC 23445 / NCTC 10510).